The primary structure comprises 365 residues: Putative glutamate--cysteine ligase 2-2 (365 aa).

This sequence belongs to the glutamate--cysteine ligase type 2 family. YbdK subfamily.

The catalysed reaction is L-cysteine + L-glutamate + ATP = gamma-L-glutamyl-L-cysteine + ADP + phosphate + H(+). ATP-dependent carboxylate-amine ligase which exhibits weak glutamate--cysteine ligase activity. This Mycolicibacterium vanbaalenii (strain DSM 7251 / JCM 13017 / BCRC 16820 / KCTC 9966 / NRRL B-24157 / PYR-1) (Mycobacterium vanbaalenii) protein is Putative glutamate--cysteine ligase 2-2.